A 510-amino-acid polypeptide reads, in one-letter code: Glycerol kinase (510 aa).

Residue Thr14 coordinates ADP. ATP contacts are provided by Thr14 and Thr15. Thr14 contributes to the sn-glycerol 3-phosphate binding site. Residue Arg18 participates in ADP binding. 4 residues coordinate sn-glycerol 3-phosphate: Arg84, Glu85, Tyr136, and Asp256. Glycerol is bound by residues Arg84, Glu85, Tyr136, Asp256, and Gln257. ADP-binding residues include Thr278, Gly322, Gly422, and Asn426. ATP-binding residues include Thr278, Gly322, and Gly422.

The protein belongs to the FGGY kinase family.

It carries out the reaction glycerol + ATP = sn-glycerol 3-phosphate + ADP + H(+). The protein operates within polyol metabolism; glycerol degradation via glycerol kinase pathway; sn-glycerol 3-phosphate from glycerol: step 1/1. Key enzyme in the regulation of glycerol uptake and metabolism. Catalyzes the phosphorylation of glycerol to yield sn-glycerol 3-phosphate. It also catalyzes the phosphorylation of dihydroxyacetone (DHA). Involved, together with the DHA kinase DhaKLM, in the metabolism of DHA. In Haloferax volcanii (strain ATCC 29605 / DSM 3757 / JCM 8879 / NBRC 14742 / NCIMB 2012 / VKM B-1768 / DS2) (Halobacterium volcanii), this protein is Glycerol kinase.